The primary structure comprises 157 residues: Ribonuclease H (157 aa).

The region spanning 1 to 142 (MKKKIKIFID…CDFLAKISAK (142 aa)) is the RNase H type-1 domain. Mg(2+) is bound by residues aspartate 10, glutamate 48, aspartate 70, and aspartate 134.

The protein belongs to the RNase H family. Monomer. It depends on Mg(2+) as a cofactor.

The protein localises to the cytoplasm. The catalysed reaction is Endonucleolytic cleavage to 5'-phosphomonoester.. Endonuclease that specifically degrades the RNA of RNA-DNA hybrids. This Wigglesworthia glossinidia brevipalpis protein is Ribonuclease H.